The chain runs to 312 residues: DNA-directed RNA polymerase subunit alpha (312 aa).

The tract at residues 1–226 (MIEFEKPIIT…EHLNLFTDLT (226 aa)) is alpha N-terminal domain (alpha-NTD). Positions 243 to 312 (DEKVLDRTIE…DLGLGLKNDK (70 aa)) are alpha C-terminal domain (alpha-CTD).

It belongs to the RNA polymerase alpha chain family. As to quaternary structure, homodimer. The RNAP catalytic core consists of 2 alpha, 1 beta, 1 beta' and 1 omega subunit. When a sigma factor is associated with the core the holoenzyme is formed, which can initiate transcription.

The catalysed reaction is RNA(n) + a ribonucleoside 5'-triphosphate = RNA(n+1) + diphosphate. Its function is as follows. DNA-dependent RNA polymerase catalyzes the transcription of DNA into RNA using the four ribonucleoside triphosphates as substrates. The protein is DNA-directed RNA polymerase subunit alpha of Streptococcus mutans serotype c (strain ATCC 700610 / UA159).